The chain runs to 557 residues: Tight junction-associated protein 1 (557 aa).

The interval 1–37 (MTSAAPAKKPYRKAPPEHRELRLEIPGSRLEQEEPLT) is disordered. Thr2 carries the post-translational modification N-acetylthreonine. The segment covering 14-23 (APPEHRELRL) has biased composition (basic and acidic residues). Positions 42 to 171 (MKLLQEENEE…EELNERYRLD (130 aa)) form a coiled coil. 2 disordered regions span residues 266-303 (MSEG…SPEE) and 309-328 (AFEK…LYPG). The span at 274–286 (PASPPAPGSPTPQ) shows a compositional bias: pro residues. Ser300 is subject to Phosphoserine. The segment covering 316–325 (YPTPSPPHPL) has biased composition (pro residues). Residue Thr318 is modified to Phosphothreonine. Ser320 and Ser345 each carry phosphoserine. Positions 364–409 (EEGSERARPSPVPSTPASAQASPHHQPSPAPLTLSAPASSASSEED) are disordered. Positions 378 to 388 (TPASAQASPHH) are enriched in polar residues. Low complexity predominate over residues 394–405 (PLTLSAPASSAS). Thr422 carries the phosphothreonine modification. Over residues 439-456 (LPELQRHFAHSPADRDEV) the composition is skewed to basic and acidic residues. Positions 439 to 557 (LPELQRHFAH…QAQEQGNLLN (119 aa)) are disordered. Phosphoserine is present on Ser491. The span at 530-542 (RSPKRMGVHHLHR) shows a compositional bias: basic residues. Residue Ser545 is modified to Phosphoserine. The segment covering 546–557 (LTQAQEQGNLLN) has biased composition (polar residues).

As to quaternary structure, interacts with DLG1. Interacts with ARF6 (GTP-bound form). Ubiquitously expressed.

It is found in the golgi apparatus. Its subcellular location is the trans-Golgi network. The protein resides in the cell junction. The protein localises to the tight junction. It localises to the cell membrane. Plays a role in regulating the structure of the Golgi apparatus. The protein is Tight junction-associated protein 1 of Homo sapiens (Human).